A 242-amino-acid polypeptide reads, in one-letter code: NADH-quinone oxidoreductase subunit C (242 aa).

The segment at 67–101 (VVNSVGLGHKEQGAKPITNRRTTSDNVGESKSIDY) is insert.

The protein belongs to the complex I 30 kDa subunit family. In terms of assembly, NDH-1 is composed of 14 different subunits. Subunits NuoB, C, D, E, F, and G constitute the peripheral sector of the complex.

It localises to the cell inner membrane. It catalyses the reaction a quinone + NADH + 5 H(+)(in) = a quinol + NAD(+) + 4 H(+)(out). NDH-1 shuttles electrons from NADH, via FMN and iron-sulfur (Fe-S) centers, to quinones in the respiratory chain. The immediate electron acceptor for the enzyme in this species is believed to be ubiquinone. Couples the redox reaction to proton translocation (for every two electrons transferred, four hydrogen ions are translocated across the cytoplasmic membrane), and thus conserves the redox energy in a proton gradient. This Rickettsia conorii (strain ATCC VR-613 / Malish 7) protein is NADH-quinone oxidoreductase subunit C.